The following is a 372-amino-acid chain: Queuine tRNA-ribosyltransferase (372 aa).

Asp-92 (proton acceptor) is an active-site residue. Substrate contacts are provided by residues 92-96 (DSGGF), Asp-146, Gln-188, and Gly-215. Residues 246–252 (GIGTLRE) form an RNA binding region. Asp-265 functions as the Nucleophile in the catalytic mechanism. The tract at residues 270–274 (TRLGR) is RNA binding; important for wobble base 34 recognition. Zn(2+) is bound by residues Cys-303, Cys-305, Cys-308, and His-334.

The protein belongs to the queuine tRNA-ribosyltransferase family. In terms of assembly, homodimer. Within each dimer, one monomer is responsible for RNA recognition and catalysis, while the other monomer binds to the replacement base PreQ1. It depends on Zn(2+) as a cofactor.

The enzyme catalyses 7-aminomethyl-7-carbaguanine + guanosine(34) in tRNA = 7-aminomethyl-7-carbaguanosine(34) in tRNA + guanine. Its pathway is tRNA modification; tRNA-queuosine biosynthesis. Catalyzes the base-exchange of a guanine (G) residue with the queuine precursor 7-aminomethyl-7-deazaguanine (PreQ1) at position 34 (anticodon wobble position) in tRNAs with GU(N) anticodons (tRNA-Asp, -Asn, -His and -Tyr). Catalysis occurs through a double-displacement mechanism. The nucleophile active site attacks the C1' of nucleotide 34 to detach the guanine base from the RNA, forming a covalent enzyme-RNA intermediate. The proton acceptor active site deprotonates the incoming PreQ1, allowing a nucleophilic attack on the C1' of the ribose to form the product. After dissociation, two additional enzymatic reactions on the tRNA convert PreQ1 to queuine (Q), resulting in the hypermodified nucleoside queuosine (7-(((4,5-cis-dihydroxy-2-cyclopenten-1-yl)amino)methyl)-7-deazaguanosine). The protein is Queuine tRNA-ribosyltransferase of Synechococcus sp. (strain CC9605).